The following is a 1084-amino-acid chain: Autophagy-related protein 11 (1084 aa).

2 coiled-coil regions span residues 585–739 and 847–879; these read VQNL…LTES and VIRRFNDIESLAKKLRKENKNKKILLQKYTNDK. 2 disordered regions span residues 925-961 and 973-1007; these read SMIPPRVIPNRVEPASNTNNSNPSSVPEDMGSPNMNR and NIGSNNSNNNYVNTGNANGNNKPETNIDTTSSTNA. Composition is skewed to low complexity over residues 940-949 and 973-993; these read SNTNNSNPSS and NIGSNNSNNNYVNTGNANGNN. A compositionally biased stretch (polar residues) spans 994–1007; that stretch reads KPETNIDTTSSTNA.

It belongs to the ATG11 family. Homodimer and potential homooligomers. Interacts with ATG1 kinase and the ATG19 and ATG34 cargo protein transporters. Interacts with ATG9, ATG17 and ATG20.

It localises to the preautophagosomal structure membrane. It is found in the vacuole membrane. Functionally, involved in cytoplasm to vacuole transport (Cvt), pexophagy, mitophagy and nucleophagy. Recruits mitochondria for their selective degradation via autophagy (mitophagy) during starvation, through its interaction with ATG32. Works as scaffold proteins that recruit ATG proteins to the pre-autophagosome (PAS), the site of vesicle/autophagosome formation. Required for ATG9 anterograde transport from the mitochondria to the PAS. Also recruits the ATG19-prAPE1 complex to the PAS. Required for the Cvt vesicles completion. In Kluyveromyces marxianus (strain DMKU3-1042 / BCC 29191 / NBRC 104275) (Yeast), this protein is Autophagy-related protein 11.